A 264-amino-acid chain; its full sequence is Granzyme K (264 aa).

The first 24 residues, 1–24 (MTKFSSFSLFFLIVGAYMTHVCFN), serve as a signal peptide directing secretion. The propeptide at 25–26 (ME) is activation peptide. Residues 27 to 259 (IIGGKEVSPH…YQTWIKSNLV (233 aa)) enclose the Peptidase S1 domain. Cys-52 and Cys-68 are disulfide-bonded. Catalysis depends on charge relay system residues His-67 and Asp-116. Cystine bridges form between Cys-149/Cys-220, Cys-181/Cys-199, and Cys-210/Cys-234. Ser-214 acts as the Charge relay system in catalysis.

Belongs to the peptidase S1 family. Granzyme subfamily. As to expression, expressed in lung, spleen, thymus and peripheral blood leukocytes.

It is found in the secreted. The protein localises to the cytoplasmic granule. The chain is Granzyme K (GZMK) from Homo sapiens (Human).